The chain runs to 434 residues: Rubisco accumulation factor 1.1, chloroplastic (434 aa).

The N-terminal 51 residues, 1-51, are a transit peptide targeting the chloroplast; the sequence is MLSLTATTLSSSIFTQSKTHGFFNTRPVYRKPFTTITSALIPASNRQAPPK. The segment at 65–254 is N-terminal alpha-helix; that stretch reads IPPKFRSLDT…KAKKAVLREL (190 aa). The C-terminal beta sheet stretch occupies residues 273 to 419; sequence VPVVRLRFGE…GMVVLVVRPP (147 aa).

It belongs to the RAF family. As to quaternary structure, homodimer.

It localises to the plastid. The protein resides in the chloroplast. Its function is as follows. Required for assembly or stability of RuBisCO. Acts at a postchaperonin step to fold and/or assemble the large subunit (rbcL) into RuBisCO. RAF1 binds first to a rbcL dimer (rbcL(2)), leading to a rbcL(8)-RAF1(4) complex formation. In the next step, RBCS displaces RAF1, thus resulting in holoenzyme formation. The polypeptide is Rubisco accumulation factor 1.1, chloroplastic (Arabidopsis thaliana (Mouse-ear cress)).